Here is a 679-residue protein sequence, read N- to C-terminus: Glycine--tRNA ligase beta subunit (679 aa).

It belongs to the class-II aminoacyl-tRNA synthetase family. In terms of assembly, tetramer of two alpha and two beta subunits.

The protein localises to the cytoplasm. The catalysed reaction is tRNA(Gly) + glycine + ATP = glycyl-tRNA(Gly) + AMP + diphosphate. In Streptococcus equi subsp. zooepidemicus (strain H70), this protein is Glycine--tRNA ligase beta subunit.